The primary structure comprises 482 residues: Ribosomal protein uS12 methylthiotransferase RimO (482 aa).

In terms of domain architecture, MTTase N-terminal spans 2–115 (MKVHIITLGC…IAEVVETFQP (114 aa)). Positions 11, 47, 79, 177, 181, and 184 each coordinate [4Fe-4S] cluster. A Radical SAM core domain is found at 163 to 394 (RAVGPSAYLK…MRLQQRISRE (232 aa)). The TRAM domain maps to 397–466 (RRWLGRVVRV…DYDLWGDVVG (70 aa)).

This sequence belongs to the methylthiotransferase family. RimO subfamily. It depends on [4Fe-4S] cluster as a cofactor.

It is found in the cytoplasm. The catalysed reaction is L-aspartate(89)-[ribosomal protein uS12]-hydrogen + (sulfur carrier)-SH + AH2 + 2 S-adenosyl-L-methionine = 3-methylsulfanyl-L-aspartate(89)-[ribosomal protein uS12]-hydrogen + (sulfur carrier)-H + 5'-deoxyadenosine + L-methionine + A + S-adenosyl-L-homocysteine + 2 H(+). Functionally, catalyzes the methylthiolation of an aspartic acid residue of ribosomal protein uS12. This is Ribosomal protein uS12 methylthiotransferase RimO from Roseiflexus castenholzii (strain DSM 13941 / HLO8).